A 64-amino-acid polypeptide reads, in one-letter code: Cold shock protein CapA (64 aa).

Positions 7–64 (GTVKWFNDEKGFGFITPQGGGDDLFVHFKAIESDGFKSLKEGQTVSFVAEKGQKGMQA) constitute a CSD domain.

The protein localises to the cytoplasm. Its function is as follows. Affects cell viability at low temperatures. This chain is Cold shock protein CapA (capA), found in Pseudomonas fragi.